The sequence spans 120 residues: Xibalbin-1 (120 aa).

The N-terminal stretch at 1–21 (MISKILIAACALLLISHLVLA) is a signal peptide. Positions 22-63 (VPYLEDGLNSLHNRTGESDETRGYTIQLLKEMPEDDAVEDYS) are excised as a propeptide. Cystine bridges form between Cys-79–Cys-94, Cys-86–Cys-99, Cys-93–Cys-110, and Cys-101–Cys-108.

Belongs to the xibalbin-1 family. In terms of tissue distribution, expressed by the venom gland. Not found in the whole body.

The protein resides in the secreted. Probable neurotoxin. Strongly inhibits voltage-gated potassium channels (Kv1.1/KCNA1, Kv1.2/KCNA2, Kv1.3/KCNA3, and Kv1.6/KCNA6, with the highest toxicity against Kv1.6 (74% inhibition at 1 uM)) and mildly inhibits sodium channels (Nav1.2/SCN2A, Nav1.4/SCN4A, Nav1.5/SCN5A, Nav1.6/SCN8A, and BgNav). Induces activation of protein kinase A type II (PKA-II) and MAP kinase Erk1/2 in primary nociceptive and non-nociceptive sensory neurons. Does not show cytotoxic activity. Does not have an impact on Ca2+, cAMP, and NO signaling in the cell types analyzed. Does not interfere with the adhesion of leukocytes to endothelial cells. The protein is Xibalbin-1 of Xibalbanus tulumensis (Blind cave remipede).